The sequence spans 255 residues: Hydroxyacylglutathione hydrolase (255 aa).

The Zn(2+) site is built by H59, H61, D63, H64, H118, D144, and H182.

This sequence belongs to the metallo-beta-lactamase superfamily. Glyoxalase II family. As to quaternary structure, monomer. The cofactor is Zn(2+).

It catalyses the reaction an S-(2-hydroxyacyl)glutathione + H2O = a 2-hydroxy carboxylate + glutathione + H(+). It functions in the pathway secondary metabolite metabolism; methylglyoxal degradation; (R)-lactate from methylglyoxal: step 2/2. Thiolesterase that catalyzes the hydrolysis of S-D-lactoyl-glutathione to form glutathione and D-lactic acid. This Synechococcus sp. (strain WH7803) protein is Hydroxyacylglutathione hydrolase.